A 263-amino-acid chain; its full sequence is 4-hydroxy-tetrahydrodipicolinate reductase (263 aa).

Residues 8-13 (GACGRM), D34, 99-101 (GTT), and 125-128 (SPNY) contribute to the NAD(+) site. H157 functions as the Proton donor/acceptor in the catalytic mechanism. Position 158 (H158) interacts with (S)-2,3,4,5-tetrahydrodipicolinate. The Proton donor role is filled by K161. 167–168 (GT) contributes to the (S)-2,3,4,5-tetrahydrodipicolinate binding site.

The protein belongs to the DapB family.

The protein localises to the cytoplasm. The enzyme catalyses (S)-2,3,4,5-tetrahydrodipicolinate + NAD(+) + H2O = (2S,4S)-4-hydroxy-2,3,4,5-tetrahydrodipicolinate + NADH + H(+). The catalysed reaction is (S)-2,3,4,5-tetrahydrodipicolinate + NADP(+) + H2O = (2S,4S)-4-hydroxy-2,3,4,5-tetrahydrodipicolinate + NADPH + H(+). The protein operates within amino-acid biosynthesis; L-lysine biosynthesis via DAP pathway; (S)-tetrahydrodipicolinate from L-aspartate: step 4/4. In terms of biological role, catalyzes the conversion of 4-hydroxy-tetrahydrodipicolinate (HTPA) to tetrahydrodipicolinate. This chain is 4-hydroxy-tetrahydrodipicolinate reductase, found in Methanosarcina mazei (strain ATCC BAA-159 / DSM 3647 / Goe1 / Go1 / JCM 11833 / OCM 88) (Methanosarcina frisia).